The following is a 135-amino-acid chain: Beta-galactoside-binding lectin (135 aa).

The residue at position 2 (Ser-2) is an N-acetylserine. The cysteines at positions 3 and 8 are disulfide-linked. Residues 5-135 (GPVCTNLGLK…DFTLRSVSWE (131 aa)) form the Galectin domain. Residues 46–50 (HFNPR), His-54, Asn-63, 70–73 (WGTE), and 70–76 (WGTEQRE) each bind a beta-D-galactoside.

As to quaternary structure, homodimer; disulfide-linked. (Microbial infection) Interacts with newcastle disease virus protein HN; this interaction inhibits viral adsorption rather than internalization. In terms of tissue distribution, mainly in the intestine (adult), mainly in the skin (embryo).

Its function is as follows. This protein binds beta-galactoside. May participate in host antiviral defense through specific interaction with glycans on the viral envelope glycoproteins. In Gallus gallus (Chicken), this protein is Beta-galactoside-binding lectin (CG-1B).